The sequence spans 138 residues: MLIPRRVKHRKQHHPKRSGAAKGGTTVTFGEWGIQALTPAYVTNRQIEAARIAMTRYIKRGGKVWINIYPDRPITKKPAETRMGSGKGSPEWWVANVKPGRVLFELSGVTEDVAREALRLAIHKLPLKARIIRREGGE.

Over residues 1 to 19 (MLIPRRVKHRKQHHPKRSG) the composition is skewed to basic residues. The disordered stretch occupies residues 1–24 (MLIPRRVKHRKQHHPKRSGAAKGG).

Belongs to the universal ribosomal protein uL16 family. In terms of assembly, part of the 50S ribosomal subunit.

Functionally, binds 23S rRNA and is also seen to make contacts with the A and possibly P site tRNAs. In Micrococcus luteus (strain ATCC 4698 / DSM 20030 / JCM 1464 / CCM 169 / CCUG 5858 / IAM 1056 / NBRC 3333 / NCIMB 9278 / NCTC 2665 / VKM Ac-2230) (Micrococcus lysodeikticus), this protein is Large ribosomal subunit protein uL16.